Here is a 179-residue protein sequence, read N- to C-terminus: ATP synthase subunit delta (179 aa).

Belongs to the ATPase delta chain family. In terms of assembly, F-type ATPases have 2 components, F(1) - the catalytic core - and F(0) - the membrane proton channel. F(1) has five subunits: alpha(3), beta(3), gamma(1), delta(1), epsilon(1). F(0) has three main subunits: a(1), b(2) and c(10-14). The alpha and beta chains form an alternating ring which encloses part of the gamma chain. F(1) is attached to F(0) by a central stalk formed by the gamma and epsilon chains, while a peripheral stalk is formed by the delta and b chains.

The protein resides in the cell membrane. F(1)F(0) ATP synthase produces ATP from ADP in the presence of a proton or sodium gradient. F-type ATPases consist of two structural domains, F(1) containing the extramembraneous catalytic core and F(0) containing the membrane proton channel, linked together by a central stalk and a peripheral stalk. During catalysis, ATP synthesis in the catalytic domain of F(1) is coupled via a rotary mechanism of the central stalk subunits to proton translocation. In terms of biological role, this protein is part of the stalk that links CF(0) to CF(1). It either transmits conformational changes from CF(0) to CF(1) or is implicated in proton conduction. In Listeria innocua serovar 6a (strain ATCC BAA-680 / CLIP 11262), this protein is ATP synthase subunit delta.